The following is a 556-amino-acid chain: Membrane protein insertase YidC (556 aa).

The chain crosses the membrane as a helical span at residues 5–25 (TLTAIVLSFVLLTAFQFYMAW). The disordered stretch occupies residues 36–74 (QVQSGESSAPAPLASTAPVADALPPPVEGMAGSAPQQAM). Residues 42–55 (SSAPAPLASTAPVA) show a composition bias toward low complexity. 4 consecutive transmembrane segments (helical) span residues 370–390 (NYGV…FPLA), 441–461 (LPIL…FLSV), 468–488 (FMLW…PLLM), and 510–530 (IMMF…SGLV).

Belongs to the OXA1/ALB3/YidC family. Type 1 subfamily. As to quaternary structure, interacts with the Sec translocase complex via SecD. Specifically interacts with transmembrane segments of nascent integral membrane proteins during membrane integration.

The protein resides in the cell inner membrane. Its function is as follows. Required for the insertion and/or proper folding and/or complex formation of integral membrane proteins into the membrane. Involved in integration of membrane proteins that insert both dependently and independently of the Sec translocase complex, as well as at least some lipoproteins. Aids folding of multispanning membrane proteins. The chain is Membrane protein insertase YidC from Magnetococcus marinus (strain ATCC BAA-1437 / JCM 17883 / MC-1).